The following is a 380-amino-acid chain: MSAAIDAVELSRELIRKPSVTPADEGAMDVVERTLAGLGFACRRMRFGEIENLYARYGTARPNLCFAGHTDVVPVGDAAAWSKDAFAADVVDGVLIGRGAVDMKSAIAAFAAAAAEAIAAGRVTGSVSFLITGDEEGVATHGTKKVVEALLAEGEAIDHCVVGEPTSAESFGDMVKVGRRGSINAEILVEGIQGHVAYPHRAANPVPVLVRLLAALQDRALDEGYPEFQPSNLEVTMIDVPNTATNVIPGTAKARLNIRFNPNHTGQALADWIAAEARKAADGFKGKVTVTPQISGEAFLTERGPFTELVAAAVKDVTGAEPELSTSGGTSDARFIRALCPVVEVGLVGRTMHQVDERAPVDEIRRLQAVYAAIIARYFA.

Histidine 69 contributes to the Zn(2+) binding site. The active site involves aspartate 71. A Zn(2+)-binding site is contributed by aspartate 102. The Proton acceptor role is filled by glutamate 135. Residues glutamate 136, glutamate 164, and histidine 353 each contribute to the Zn(2+) site.

This sequence belongs to the peptidase M20A family. DapE subfamily. Homodimer. Zn(2+) serves as cofactor. It depends on Co(2+) as a cofactor.

It catalyses the reaction N-succinyl-(2S,6S)-2,6-diaminopimelate + H2O = (2S,6S)-2,6-diaminopimelate + succinate. It functions in the pathway amino-acid biosynthesis; L-lysine biosynthesis via DAP pathway; LL-2,6-diaminopimelate from (S)-tetrahydrodipicolinate (succinylase route): step 3/3. Functionally, catalyzes the hydrolysis of N-succinyl-L,L-diaminopimelic acid (SDAP), forming succinate and LL-2,6-diaminopimelate (DAP), an intermediate involved in the bacterial biosynthesis of lysine and meso-diaminopimelic acid, an essential component of bacterial cell walls. This Phenylobacterium zucineum (strain HLK1) protein is Succinyl-diaminopimelate desuccinylase.